The chain runs to 149 residues: Pleckstrin homology domain-containing family J member 1 (149 aa).

The PH domain maps to R15–Y108.

The sequence is that of Pleckstrin homology domain-containing family J member 1 (plekhj1) from Xenopus tropicalis (Western clawed frog).